The primary structure comprises 363 residues: Mitochondrial RNA-splicing protein MRS1 (363 aa).

As to quaternary structure, homodimer. Forms a ribonucleoprotein complex composed of maturase bI3 and 2 dimers of MRS1 that assemble around the bI3 RNA.

The protein resides in the mitochondrion matrix. Functionally, function in mitochondrial RNA splicing in the excision of mitochondrial group I introns aI5 beta from COX1 and bI3 from COB transcripts and thus would be involved in obtaining the correct structure of the intron, to allow the RNA catalyzed reactions to occur. This chain is Mitochondrial RNA-splicing protein MRS1 (MRS1), found in Saccharomyces cerevisiae (strain ATCC 204508 / S288c) (Baker's yeast).